Reading from the N-terminus, the 102-residue chain is NADH-quinone oxidoreductase subunit K (102 aa).

A run of 3 helical transmembrane segments spans residues 5–25, 31–51, and 65–85; these read LSHYLTVSAILFTLGVFGIFL, IVILMSVELILLAVNINMVAF, and LFILTVAAAEAAIGLAILVVF.

The protein belongs to the complex I subunit 4L family. As to quaternary structure, NDH-1 is composed of 14 different subunits. Subunits NuoA, H, J, K, L, M, N constitute the membrane sector of the complex.

The protein resides in the cell inner membrane. It carries out the reaction a quinone + NADH + 5 H(+)(in) = a quinol + NAD(+) + 4 H(+)(out). Functionally, NDH-1 shuttles electrons from NADH, via FMN and iron-sulfur (Fe-S) centers, to quinones in the respiratory chain. The immediate electron acceptor for the enzyme in this species is believed to be ubiquinone. Couples the redox reaction to proton translocation (for every two electrons transferred, four hydrogen ions are translocated across the cytoplasmic membrane), and thus conserves the redox energy in a proton gradient. The sequence is that of NADH-quinone oxidoreductase subunit K from Rhizobium leguminosarum bv. trifolii (strain WSM2304).